The chain runs to 311 residues: Pyrimidine-specific ribonucleoside hydrolase RihA (311 aa).

H240 is a catalytic residue.

It belongs to the IUNH family. RihA subfamily.

In terms of biological role, hydrolyzes with equal efficiency cytidine or uridine to ribose and cytosine or uracil, respectively. The sequence is that of Pyrimidine-specific ribonucleoside hydrolase RihA from Escherichia coli O45:K1 (strain S88 / ExPEC).